Reading from the N-terminus, the 887-residue chain is Chaperone protein ClpB 2 (887 aa).

The 142-residue stretch at 6-147 folds into the Clp R domain; sequence PTKFTDKAWE…AATVKAIRGA (142 aa). Repeat regions lie at residues 9–73 and 84–147; these read FTDK…ARQQ and CGRS…IRGA. The segment at 160 to 342 is NBD1; it reads AALEKYGRDL…RRFQQVYIGQ (183 aa). 207–214 lines the ATP pocket; it reads GEPGVGKT. A linker region spans residues 343–559; the sequence is PSVEDTISIL…IAEIVAKWTG (217 aa). Residues 393-535 adopt a coiled-coil conformation; the sequence is IDLVDEAAAK…TEAQLLELQA (143 aa). Residues 569–780 are NBD2; that stretch reads ERQKLLQLEQ…RIDDVILFHG (212 aa). ATP is bound at residue 619 to 626; that stretch reads GPTGVGKT. The segment at 781–887 is C-terminal; the sequence is LGRTELAQIA…TGDRDTVSAS (107 aa).

This sequence belongs to the ClpA/ClpB family. Homohexamer. The oligomerization is ATP-dependent.

The protein localises to the cytoplasm. Part of a stress-induced multi-chaperone system, it is involved in the recovery of the cell from heat-induced damage, in cooperation with DnaK, DnaJ and GrpE. Acts before DnaK, in the processing of protein aggregates. Protein binding stimulates the ATPase activity; ATP hydrolysis unfolds the denatured protein aggregates, which probably helps expose new hydrophobic binding sites on the surface of ClpB-bound aggregates, contributing to the solubilization and refolding of denatured protein aggregates by DnaK. This chain is Chaperone protein ClpB 2 (clpB2), found in Thermosynechococcus vestitus (strain NIES-2133 / IAM M-273 / BP-1).